The primary structure comprises 364 residues: Alanine racemase (364 aa).

The active-site Proton acceptor; specific for D-alanine is K35. K35 carries the N6-(pyridoxal phosphate)lysine modification. R131 is a substrate binding site. Y256 serves as the catalytic Proton acceptor; specific for L-alanine. M304 contributes to the substrate binding site.

It belongs to the alanine racemase family. It depends on pyridoxal 5'-phosphate as a cofactor.

It carries out the reaction L-alanine = D-alanine. It participates in amino-acid biosynthesis; D-alanine biosynthesis; D-alanine from L-alanine: step 1/1. In terms of biological role, catalyzes the interconversion of L-alanine and D-alanine. May also act on other amino acids. This Chromohalobacter salexigens (strain ATCC BAA-138 / DSM 3043 / CIP 106854 / NCIMB 13768 / 1H11) protein is Alanine racemase (alr).